The sequence spans 427 residues: Enolase (427 aa).

Glutamine 163 lines the (2R)-2-phosphoglycerate pocket. Catalysis depends on glutamate 205, which acts as the Proton donor. Positions 242, 283, and 310 each coordinate Mg(2+). The (2R)-2-phosphoglycerate site is built by lysine 335, arginine 364, serine 365, and lysine 386. The active-site Proton acceptor is the lysine 335.

This sequence belongs to the enolase family. It depends on Mg(2+) as a cofactor.

It localises to the cytoplasm. The protein resides in the secreted. Its subcellular location is the cell surface. It carries out the reaction (2R)-2-phosphoglycerate = phosphoenolpyruvate + H2O. The protein operates within carbohydrate degradation; glycolysis; pyruvate from D-glyceraldehyde 3-phosphate: step 4/5. Catalyzes the reversible conversion of 2-phosphoglycerate (2-PG) into phosphoenolpyruvate (PEP). It is essential for the degradation of carbohydrates via glycolysis. This is Enolase from Salinispora arenicola (strain CNS-205).